The following is a 376-amino-acid chain: Deoxyguanosinetriphosphate triphosphohydrolase-like protein (376 aa).

Residues 62–198 (RLTHSLEVSA…AALADDISYI (137 aa)) form the HD domain.

This sequence belongs to the dGTPase family. Type 2 subfamily.

This Rickettsia canadensis (strain McKiel) protein is Deoxyguanosinetriphosphate triphosphohydrolase-like protein.